The sequence spans 219 residues: Pollen-specific protein SF3 (219 aa).

LIM zinc-binding domains lie at 9–109 (QKCT…TRDK) and 110–167 (CNAC…QLFK). The segment at 181–219 (VAAPAESETQNTETQNAETQNADTQNADTQNTETQNGSV) is disordered. Over residues 185-202 (AESETQNTETQNAETQNA) the composition is skewed to low complexity. Residues 203-219 (DTQNADTQNTETQNGSV) are compositionally biased toward polar residues.

Pollen.

In terms of biological role, could possibly involved in controlling pollen-specific processes such as male gamete maturation, pollen tube formation, or even fertilization. The sequence is that of Pollen-specific protein SF3 (SF3) from Helianthus annuus (Common sunflower).